Reading from the N-terminus, the 49-residue chain is Small ribosomal subunit protein eS31 (49 aa).

Cys-21, Cys-24, Cys-39, and Cys-42 together coordinate Zn(2+). A C4-type zinc finger spans residues 21–42; the sequence is CPRCGNGVFLAEHEDRMSCGRC.

Belongs to the eukaryotic ribosomal protein eS31 family. As to quaternary structure, part of the 30S ribosomal subunit. Requires Zn(2+) as cofactor.

The chain is Small ribosomal subunit protein eS31 from Methanothrix thermoacetophila (strain DSM 6194 / JCM 14653 / NBRC 101360 / PT) (Methanosaeta thermophila).